The chain runs to 232 residues: MNKTEQDQLKKEAATKAAKMVEPNSVLGVGTGSTVAFFIDALGERKEREGFSLKHIVTTSNRSKKQLEGLGFKVDELADIDQADLTVDGADRVDDNLDGIKGGGGALTLEKNVAINSKKIIWIVDESKLVHHLSGFPLPVEVLPVSAEQNFKRFEAEGLKPQWRLNDEGKRYVTHYGNYIIDLAADPTPVPHGLADYLDHTVGVVEHGLFLDMCDEVIIAHSDGTIEDKKRK.

Substrate-binding positions include Thr31 to Thr34, Asp88 to Asp91, and Lys101 to Gly104. Glu110 acts as the Proton acceptor in catalysis. Lys128 contributes to the substrate binding site.

This sequence belongs to the ribose 5-phosphate isomerase family. Homodimer.

The enzyme catalyses aldehydo-D-ribose 5-phosphate = D-ribulose 5-phosphate. It participates in carbohydrate degradation; pentose phosphate pathway; D-ribose 5-phosphate from D-ribulose 5-phosphate (non-oxidative stage): step 1/1. Catalyzes the reversible conversion of ribose-5-phosphate to ribulose 5-phosphate. This is Ribose-5-phosphate isomerase A from Lactobacillus johnsonii (strain CNCM I-12250 / La1 / NCC 533).